Here is a 166-residue protein sequence, read N- to C-terminus: Protein-export protein SecB (166 aa).

It belongs to the SecB family. Homotetramer, a dimer of dimers. One homotetramer interacts with 1 SecA dimer.

It localises to the cytoplasm. Its function is as follows. One of the proteins required for the normal export of preproteins out of the cell cytoplasm. It is a molecular chaperone that binds to a subset of precursor proteins, maintaining them in a translocation-competent state. It also specifically binds to its receptor SecA. The protein is Protein-export protein SecB of Rhizorhabdus wittichii (strain DSM 6014 / CCUG 31198 / JCM 15750 / NBRC 105917 / EY 4224 / RW1) (Sphingomonas wittichii).